A 261-amino-acid chain; its full sequence is 5-oxoprolinase subunit A (261 aa).

It belongs to the LamB/PxpA family. As to quaternary structure, forms a complex composed of PxpA, PxpB and PxpC.

The enzyme catalyses 5-oxo-L-proline + ATP + 2 H2O = L-glutamate + ADP + phosphate + H(+). Functionally, catalyzes the cleavage of 5-oxoproline to form L-glutamate coupled to the hydrolysis of ATP to ADP and inorganic phosphate. This chain is 5-oxoprolinase subunit A, found in Symbiobacterium thermophilum (strain DSM 24528 / JCM 14929 / IAM 14863 / T).